The sequence spans 727 residues: Phenylalanine ammonia-lyase str11 (727 aa).

Y105 serves as the catalytic Proton donor/acceptor. Positions 210-212 (ASG) form a cross-link, 5-imidazolinone (Ala-Gly). S211 carries the post-translational modification 2,3-didehydroalanine (Ser). Residues N271, Q361, R367, N397, K468, E496, and N499 each coordinate (E)-cinnamate.

The protein belongs to the PAL/histidase family. Post-translationally, contains an active site 4-methylidene-imidazol-5-one (MIO), which is formed autocatalytically by cyclization and dehydration of residues Ala-Ser-Gly.

It catalyses the reaction L-phenylalanine = (E)-cinnamate + NH4(+). It functions in the pathway mycotoxin biosynthesis. In terms of biological role, phenylalanine ammonia-lyase; part of the gene cluster that mediates the biosynthesis of strobilurin A, an antifungal polyketide that contains a key beta-methoxyacrylate toxophore that targets the complex III of the mitochondrial electron transport chain. Strobilurin biosynthesis begins with construction of benzoyl CoA by step-wise elimination of ammonia from phenylalanine by the phenylalanine ammonia-lyase str11, oxygenation by str8 and retro-Claisen reaction to form benzoic acid, which is activated to its CoA thiolester benzoyl CoA by the dedicated CoA ligase str10. Benzoyl CoA forms the starter unit for the highly reducing polyketide synthase stpks1 that produces the polyketide prestrobilutin A. The FAD-dependent oxygenase str9 then catalyzes the key oxidative rearrangement responsible for the creation of the beta-methoxyacrylate toxophore. Str9 performs epoxidation of the 2,3 olefin of prestrobilutin A, followed by Meinwald rearrangement to furnish the aldehyde intermediate. Rapid enolization of the aldehyde intermediate would give the beta-methoxyacrylate skeleton and methylations catalyzed by str2 and str3 complete the synthesis and lead to the production of strobilurin A. The short-chain dehydrogenase stl2 and the dehydrogenase str4 play a role in the shunt pathway leading to the production of bolineol. The cluster encodes no obvious halogenase gene that could be involved in production of strobilurin B, nor any obvious dimethylallyl-transferase that could be involved in the production of strobilurin G. It is possible that unknown proteins encoded in, or near, the cluster (such as str1 or stl1) may form new classes of halogenases or dimethylally-transferases, or that the responsible genes are located elsewhere on the genome. Similarly, proteins encoded by str5/str6 hydrolases appear to have no chemical role in the biosynthesis of strobilurin A. Finally, no obvious self-resistance gene is found within the cluster. This Strobilurus tenacellus protein is Phenylalanine ammonia-lyase str11.